An 88-amino-acid chain; its full sequence is Small ribosomal subunit protein uS17 (88 aa).

Belongs to the universal ribosomal protein uS17 family. In terms of assembly, part of the 30S ribosomal subunit.

One of the primary rRNA binding proteins, it binds specifically to the 5'-end of 16S ribosomal RNA. The sequence is that of Small ribosomal subunit protein uS17 from Prochlorococcus marinus (strain MIT 9312).